A 107-amino-acid chain; its full sequence is Integration host factor (107 aa).

Residues 1 to 20 (MALPPLTPEQRAAALEKAAA) are disordered. The span at 9 to 18 (EQRAAALEKA) shows a compositional bias: low complexity. Residue lysine 54 participates in DNA binding. An H2TH motif, binds DNA motif is present at residues 64–71 (LPGVGKVR). Residues serine 82, arginine 85, arginine 88, serine 92, asparagine 93, and glutamine 94 each coordinate DNA. The tract at residues 82-94 (SESRRVRGLGSNQ) is lid, binds DNA.

It belongs to the actinobacterial IHF (aIHF) family. In terms of assembly, monomer.

The protein resides in the cytoplasm. Its subcellular location is the spore. It is found in the nucleoid. Functionally, a nucleoid-associated protein (NAP) that probably plays a role in chromosome compactation. Contributes to development and secondary metabolism, but is dispensable for growth and viability. Binds to the promoter region of a number of genes (including itself); multiple molecules of the protein bind to the DNA simultaneously, deletion alters the expression of about 30 genes (both up- and down-regulation occurs). Plays a role in controlling viability. Binds dsDNA without any obvious sequence specificity, in a concentration and length-dependent manner. Promotes supercoiling in a topoisomerase-dependent manner (counteracts TopA plasmid relaxation). Binds DNA as a monomer, contacting 8 base pairs via the phosphate backbone; each monomer can bind 2 DNA duplexes, allowing a bridging function. Alters DNA topology, constraining negative supercoils, possibly by DNA twist. Longer dsDNA binds more than one sIHF subunit. The sequence is that of Integration host factor from Streptomyces coelicolor (strain ATCC BAA-471 / A3(2) / M145).